Reading from the N-terminus, the 209-residue chain is Ribosomal RNA large subunit methyltransferase E (209 aa).

5 residues coordinate S-adenosyl-L-methionine: Gly-63, Trp-65, Asp-83, Asp-99, and Asp-124. Lys-164 serves as the catalytic Proton acceptor.

This sequence belongs to the class I-like SAM-binding methyltransferase superfamily. RNA methyltransferase RlmE family.

Its subcellular location is the cytoplasm. It catalyses the reaction uridine(2552) in 23S rRNA + S-adenosyl-L-methionine = 2'-O-methyluridine(2552) in 23S rRNA + S-adenosyl-L-homocysteine + H(+). Its function is as follows. Specifically methylates the uridine in position 2552 of 23S rRNA at the 2'-O position of the ribose in the fully assembled 50S ribosomal subunit. The sequence is that of Ribosomal RNA large subunit methyltransferase E from Vibrio parahaemolyticus serotype O3:K6 (strain RIMD 2210633).